The primary structure comprises 197 residues: Inner membrane protein RclC (197 aa).

The Periplasmic segment spans residues 1-15 (MEKYLHLLSRGDKIG). The chain crosses the membrane as a helical span at residues 16 to 36 (LTLIRLSIAIVFMWIGLLKFV). The Cytoplasmic segment spans residues 37-85 (PYEADSITPFVANSPLMSFFYEHPEDYKQYLTHEGEYKPEARAWQTANN). Residues 86–106 (TYGFSNGLGVVEVIIALLVLA) form a helical membrane-spanning segment. Topologically, residues 107-112 (NPVNRW) are periplasmic. A helical membrane pass occupies residues 113 to 133 (LGLLGGLMAFTTPLVTLSFLI). At 134-197 (TTPEAWVPAL…ESSSTLKTEY (64 aa)) the chain is on the cytoplasmic side.

The protein localises to the cell inner membrane. In terms of biological role, probably involved in reactive chlorine species (RCS) stress resistance. This Escherichia coli (strain K12) protein is Inner membrane protein RclC (rclC).